Reading from the N-terminus, the 178-residue chain is PRA1 family protein 2 (178 aa).

The Cytoplasmic portion of the chain corresponds to 1–41; sequence MSEVRLPPLRALDDFVLGSARLAAPDPGDPQRWCHRVINNL. Residues 42–62 traverse the membrane as a helical segment; sequence LYYQTNYLLCFGISLALAGYI. Residues 63-64 lie on the Extracellular side of the membrane; sequence RP. Residues 65 to 85 traverse the membrane as a helical segment; sequence LHTLLSALVVVVALGVLVWAA. Residues 86 to 96 lie on the Cytoplasmic side of the membrane; sequence ETRAAVRRCRR. Residues 97 to 119 form a helical membrane-spanning segment; that stretch reads SHPAACLAAVLAISLFILWAVGG. At 120 to 122 the chain is on the extracellular side; it reads AFT. Residues 123–140 traverse the membrane as a helical segment; that stretch reads FLLSITAPVFLILLHASL. Topologically, residues 141-178 are cytoplasmic; sequence RLRNLKNKIENKIESIGLKRTPMGLLLEALGQEQEAGS.

It belongs to the PRA1 family. As to quaternary structure, interacts with CCR5 and GDE1.

The protein localises to the endosome membrane. May be involved in ER/Golgi transport and vesicular traffic. Plays a proapoptotic role in cerulenin-induced neuroblastoma apoptosis. In Mus musculus (Mouse), this protein is PRA1 family protein 2 (Praf2).